The primary structure comprises 751 residues: Zinc finger protein 184 (751 aa).

A KRAB domain is found at 28-99; that stretch reads VTFKDVIVDF…EPSIPVGTCA (72 aa). Phosphoserine occurs at positions 117, 122, and 199. The span at 191–202 shows a compositional bias: polar residues; sequence SNLVTQEPSPEE. A disordered region spans residues 191–212; the sequence is SNLVTQEPSPEETSTKRSIKQN. A Glycyl lysine isopeptide (Lys-Gly) (interchain with G-Cter in SUMO2) cross-link involves residue lysine 206. 19 C2H2-type zinc fingers span residues 222–244, 250–272, 278–300, 306–328, 334–356, 362–384, 390–412, 418–440, 446–468, 474–496, 502–524, 530–552, 558–580, 586–608, 614–636, 642–664, 670–692, 698–720, and 726–748; these read CKCNECGKAFSYCSALIRHQRTH, YKCNECEKAFSRSENLINHQRIH, YKCDQCGKGFIEGPSLTQHQRIH, YKCDECGKAFSQRTHLVQHQRIH, YTCNECGKAFSQRGHFMEHQKIH, FKCDECDKTFTRSTHLTQHQKIH, YKCNECGKAFNGPSTFIRHHMIH, YECNECGKAFSQHSNLTQHQKTH, YDCAECGKSFSYWSSLAQHLKIH, YKCNECGKAFSYCSSLTQHRRIH, FECSECGKAFSYLSNLNQHQKTH, YECKECGKAFIRSSSLAKHERIH, YQCHECGKTFSYGSSLIQHRKIH, YKCNECGRAFNQNIHLTQHKRIH, YECAECGKAFRHCSSLAQHQKTH, YQCNKCEKTFSQSSHLTQHQRIH, YKCNECDKAFSRSTHLTEHQNTH, YNCNECRKTFSQSTYLIQHQRIH, and FGCNDCGKSFRYRSALNKHQRLH.

It belongs to the krueppel C2H2-type zinc-finger protein family. As to expression, predominant expression in testis.

It localises to the nucleus. In terms of biological role, may be involved in transcriptional regulation. The sequence is that of Zinc finger protein 184 (ZNF184) from Homo sapiens (Human).